A 207-amino-acid chain; its full sequence is Cytidylyl-2-hydroxypropylphosphonate hydrolase (207 aa).

4 residues coordinate CDP: Trp68, Arg74, Gln76, and Ser77. Residues Asn109, Asp125, Glu127, and Asp129 each contribute to the a divalent metal cation site. Lys142 is a binding site for CDP. Lys142 serves as the catalytic Proton donor. Asp143 serves as a coordination point for a divalent metal cation.

Belongs to the FomD family. Mn(2+) is required as a cofactor. Requires Co(2+) as cofactor.

It carries out the reaction cytidine 5'-({hydroxy[(S)-2-hydroxypropyl]phosphonoyl}phosphate) + H2O = (S)-2-hydroxypropylphosphonate + CMP + H(+). Its pathway is antibiotic biosynthesis; fosfomycin biosynthesis. With respect to regulation, hydrolysis of (S)-HPP-CMP is inhibited by CDP. Functionally, involved in fosfomycin biosynthesis. Catalyzes the hydrolysis of cytidylyl (S)-2-hydroxypropylphosphonate ((S)-HPP-CMP) to give (S)-2-hydroxypropylphosphonate ((S)-HPP) and CMP. Can also hydrolyze (R)-HPP-CMP and cytidylyl 2-hydroxyethylphosphonate (HEP-CMP), which is a biosynthetic intermediate before C-methylation, but the catalytic efficiency is much higher with (S)-HPP-CMP. The chain is Cytidylyl-2-hydroxypropylphosphonate hydrolase from Streptomyces fradiae (Streptomyces roseoflavus).